A 273-amino-acid chain; its full sequence is Pyrroline-5-carboxylate reductase (273 aa).

This sequence belongs to the pyrroline-5-carboxylate reductase family.

The protein localises to the cytoplasm. The catalysed reaction is L-proline + NADP(+) = (S)-1-pyrroline-5-carboxylate + NADPH + 2 H(+). It catalyses the reaction L-proline + NAD(+) = (S)-1-pyrroline-5-carboxylate + NADH + 2 H(+). Its pathway is amino-acid biosynthesis; L-proline biosynthesis; L-proline from L-glutamate 5-semialdehyde: step 1/1. The chain is Pyrroline-5-carboxylate reductase (PROC) from Pisum sativum (Garden pea).